The sequence spans 147 residues: uncharacterized protein (147 aa).

The chain crosses the membrane as a helical span at residues 71–91; it reads IDILAFVAGTVGVGSLVLLQF.

Its subcellular location is the virion. It is found in the host membrane. This is an uncharacterized protein from Acanthamoeba polyphaga mimivirus (APMV).